Reading from the N-terminus, the 92-residue chain is Small ribosomal subunit protein uS19c (92 aa).

Belongs to the universal ribosomal protein uS19 family.

Its subcellular location is the plastid. The protein localises to the chloroplast. Its function is as follows. Protein S19 forms a complex with S13 that binds strongly to the 16S ribosomal RNA. This is Small ribosomal subunit protein uS19c (rps19) from Pisum sativum (Garden pea).